A 179-amino-acid chain; its full sequence is Large ribosomal subunit protein uL5 (179 aa).

This sequence belongs to the universal ribosomal protein uL5 family. As to quaternary structure, part of the 50S ribosomal subunit; part of the 5S rRNA/L5/L18/L25 subcomplex. Contacts the 5S rRNA and the P site tRNA. Forms a bridge to the 30S subunit in the 70S ribosome.

Functionally, this is one of the proteins that bind and probably mediate the attachment of the 5S RNA into the large ribosomal subunit, where it forms part of the central protuberance. In the 70S ribosome it contacts protein S13 of the 30S subunit (bridge B1b), connecting the 2 subunits; this bridge is implicated in subunit movement. Contacts the P site tRNA; the 5S rRNA and some of its associated proteins might help stabilize positioning of ribosome-bound tRNAs. The chain is Large ribosomal subunit protein uL5 from Vibrio campbellii (strain ATCC BAA-1116).